The sequence spans 390 residues: Magnesium-protoporphyrin IX monomethyl ester [oxidative] cyclase (390 aa).

It belongs to the AcsF family. Requires Fe cation as cofactor.

The catalysed reaction is Mg-protoporphyrin IX 13-monomethyl ester + 3 NADPH + 3 O2 + 2 H(+) = 3,8-divinyl protochlorophyllide a + 3 NADP(+) + 5 H2O. The protein operates within porphyrin-containing compound metabolism; chlorophyll biosynthesis (light-independent). Functionally, catalyzes the formation of the isocyclic ring in chlorophyll biosynthesis. Mediates the cyclase reaction, which results in the formation of divinylprotochlorophyllide (Pchlide) characteristic of all chlorophylls from magnesium-protoporphyrin IX 13-monomethyl ester (MgPMME). The polypeptide is Magnesium-protoporphyrin IX monomethyl ester [oxidative] cyclase (Prochlorococcus marinus (strain AS9601)).